A 316-amino-acid chain; its full sequence is Glutamyl-Q tRNA(Asp) synthetase (316 aa).

Residues Arg-13–Ser-17 and Asp-49 each bind L-glutamate. The 'HIGH' region signature appears at Pro-16 to Ser-26. The Zn(2+) site is built by Cys-105, Cys-107, Tyr-119, and Cys-123. L-glutamate is bound by residues Tyr-176 and Arg-194. A 'KMSKS' region motif is present at residues Lys-232 to Gln-236. ATP is bound at residue Lys-235.

Belongs to the class-I aminoacyl-tRNA synthetase family. GluQ subfamily. Zn(2+) serves as cofactor.

Catalyzes the tRNA-independent activation of glutamate in presence of ATP and the subsequent transfer of glutamate onto a tRNA(Asp). Glutamate is transferred on the 2-amino-5-(4,5-dihydroxy-2-cyclopenten-1-yl) moiety of the queuosine in the wobble position of the QUC anticodon. The chain is Glutamyl-Q tRNA(Asp) synthetase from Photorhabdus laumondii subsp. laumondii (strain DSM 15139 / CIP 105565 / TT01) (Photorhabdus luminescens subsp. laumondii).